Here is a 139-residue protein sequence, read N- to C-terminus: Heat shock protein homolog C338.06c (139 aa).

The sHSP domain maps to 27-139 (AWLSCWGPAL…EFTTRIVEIQ (113 aa)).

It belongs to the small heat shock protein (HSP20) family.

The protein resides in the mitochondrion. This Schizosaccharomyces pombe (strain 972 / ATCC 24843) (Fission yeast) protein is Heat shock protein homolog C338.06c.